Reading from the N-terminus, the 153-residue chain is Membrane protein FAM174B (153 aa).

An N-terminal signal peptide occupies residues 1–27 (MSALPPQPPPPLLLLLLALLAAPAALA). The Extracellular portion of the chain corresponds to 28–84 (RRAESASASQPEAEHQPPPGPGNATQLGSGMAGGGSSNSSVDAVVTRISSLLRDLPT). Residues 31-67 (ESASASQPEAEHQPPPGPGNATQLGSGMAGGGSSNSS) are disordered. N-linked (GlcNAc...) asparagine glycosylation is present at Asn-50. The chain crosses the membrane as a helical span at residues 85–105 (LKATVIVACAFSALLIACLLL). Residues 106-153 (RVFRLGKRLKKTRKYDIITTPAERVEMAPLNEEDDEDEDSTVFDIKYR) are Cytoplasmic-facing.

This sequence belongs to the FAM174 family.

The protein resides in the cell membrane. It is found in the golgi apparatus. Functionally, essential for Golgi structural integrity. The protein is Membrane protein FAM174B (Fam174b) of Mus musculus (Mouse).